Reading from the N-terminus, the 642-residue chain is Polyglycine hydrolase (642 aa).

A signal peptide spans 1–23 (MYTSRLLLSNLASCLSLATLVAS). 4 N-linked (GlcNAc...) asparagine glycosylation sites follow: asparagine 37, asparagine 100, asparagine 159, and asparagine 341. A disulfide bond links cysteine 149 and cysteine 183. Serine 370 is an active-site residue. Asparagine 390, asparagine 407, asparagine 444, asparagine 487, and asparagine 494 each carry an N-linked (GlcNAc...) asparagine glycan.

The protein belongs to the peptidase S12 family.

It is found in the secreted. The catalysed reaction is a glycyl-glycyl-[protein] + H2O = N-terminal glycyl-[protein] + [protein]-C-terminal glycine. With respect to regulation, not inhibited by phenylmethylsulfonyl fluoride (PMSF; serine peptidase class S1 inhibitor), clavulanic acid (beta-lactamase inhibitor) or ampicillin (penicillin-binding protein (PBP) inhibitor). Serine-type endopeptidase that cleaves Gly-Gly bonds in the polyglycine linker of host plant class IV chitinases to disrupt their chitin-binding, and thereby plays a role in lowering the defense responses of the host to the fungus. Degrades Z.mays Endochitinase A (CHIA). Degrades Z.mays Endochitinase B (CHIB). Has no activity on Z.mays CHIA following CHIA cleavage by fungalysin. The polypeptide is Polyglycine hydrolase (Epicoccum sorghinum (Endophyte fungus)).